The primary structure comprises 326 residues: tRNA dimethylallyltransferase 2 (326 aa).

14-21 (GPTASGKT) provides a ligand contact to ATP. 16 to 21 (TASGKT) is a substrate binding site. The interval 39-42 (DSMQ) is interaction with substrate tRNA.

Belongs to the IPP transferase family. In terms of assembly, monomer. The cofactor is Mg(2+).

It carries out the reaction adenosine(37) in tRNA + dimethylallyl diphosphate = N(6)-dimethylallyladenosine(37) in tRNA + diphosphate. In terms of biological role, catalyzes the transfer of a dimethylallyl group onto the adenine at position 37 in tRNAs that read codons beginning with uridine, leading to the formation of N6-(dimethylallyl)adenosine (i(6)A). The chain is tRNA dimethylallyltransferase 2 from Geotalea daltonii (strain DSM 22248 / JCM 15807 / FRC-32) (Geobacter daltonii).